The primary structure comprises 362 residues: Large ribosomal subunit protein uL4A (362 aa).

Position 2 is an N-acetylserine (serine 2). Residue arginine 95 is modified to Omega-N-methylarginine. The interval 277–362 is C-terminal-extended nuclear localization signal; that stretch reads PSHIISTSDV…AVFTETLKHD (86 aa).

The protein belongs to the universal ribosomal protein uL4 family. As to quaternary structure, component of the large ribosomal subunit (LSU). Mature yeast ribosomes consist of a small (40S) and a large (60S) subunit. The 40S small subunit contains 1 molecule of ribosomal RNA (18S rRNA) and 33 different proteins (encoded by 57 genes). The large 60S subunit contains 3 rRNA molecules (25S, 5.8S and 5S rRNA) and 46 different proteins (encoded by 81 genes). uL4 is associated with the polypeptide exit tunnel. uL4 interacts with its chaperone ACL4 and the nuclear import receptor KAP104. Post-translationally, N-terminally acetylated by acetyltransferase NatA.

It localises to the cytoplasm. Its subcellular location is the nucleus. Component of the ribosome, a large ribonucleoprotein complex responsible for the synthesis of proteins in the cell. The small ribosomal subunit (SSU) binds messenger RNAs (mRNAs) and translates the encoded message by selecting cognate aminoacyl-transfer RNA (tRNA) molecules. The large subunit (LSU) contains the ribosomal catalytic site termed the peptidyl transferase center (PTC), which catalyzes the formation of peptide bonds, thereby polymerizing the amino acids delivered by tRNAs into a polypeptide chain. The nascent polypeptides leave the ribosome through a tunnel in the LSU and interact with protein factors that function in enzymatic processing, targeting, and the membrane insertion of nascent chains at the exit of the ribosomal tunnel. uL4 participates in the regulation of the accumulation of its own mRNA. This Saccharomyces cerevisiae (strain ATCC 204508 / S288c) (Baker's yeast) protein is Large ribosomal subunit protein uL4A.